The chain runs to 290 residues: Homeobox protein HMX3-B (290 aa).

Disordered stretches follow at residues 1–41 (MADS…GSSK) and 96–169 (EKVN…KKKT). Residues 107-124 (LDRHTPDPPKSDQESKEE) are compositionally biased toward basic and acidic residues. The span at 125–137 (SADDEIALEESDA) shows a compositional bias: acidic residues. Over residues 138–162 (EEPKKETDQEDDWMRKGEDLESDKK) the composition is skewed to basic and acidic residues. The homeobox DNA-binding region spans 166–225 (KKKTRTVFSRSQVFQLESTFDIKRYLSSSERAGLAASLHLTETQVKIWFQNRRNKWKRQL).

It belongs to the HMX homeobox family. As to expression, expressed in the ear placode and vesicle and in cells forming the vestibulo-acoustic ganglion.

The protein resides in the nucleus. In terms of biological role, transcription factor involved in specification of neuronal cell types and which is required for inner ear and hypothalamus development. Binds to the 5'-CAAGTG-3' core sequence. The sequence is that of Homeobox protein HMX3-B (hmx3b) from Oryzias latipes (Japanese rice fish).